The chain runs to 310 residues: p-hydroxybenzoic acid efflux pump subunit AaeA (310 aa).

Residues 12–32 form a helical membrane-spanning segment; it reads AITVVLVILAFIAIFNAWVYY.

Belongs to the membrane fusion protein (MFP) (TC 8.A.1) family.

Its subcellular location is the cell inner membrane. In terms of biological role, forms an efflux pump with AaeB. This is p-hydroxybenzoic acid efflux pump subunit AaeA from Escherichia coli O9:H4 (strain HS).